The following is a 118-amino-acid chain: Large ribosomal subunit protein bL20 (118 aa).

This sequence belongs to the bacterial ribosomal protein bL20 family.

Binds directly to 23S ribosomal RNA and is necessary for the in vitro assembly process of the 50S ribosomal subunit. It is not involved in the protein synthesizing functions of that subunit. This chain is Large ribosomal subunit protein bL20, found in Leptothrix cholodnii (strain ATCC 51168 / LMG 8142 / SP-6) (Leptothrix discophora (strain SP-6)).